The chain runs to 592 residues: Tegument protein US23 (592 aa).

The disordered stretch occupies residues 407-491 (PRSLGDGEEE…NNVVPNVERR (85 aa)). Acidic residues predominate over residues 460-481 (ADDEEQGEDDDDSGAEPMEPEE).

It belongs to the herpesviridae US22 family.

The protein resides in the virion tegument. The protein is Tegument protein US23 (US23) of Homo sapiens (Human).